Here is a 775-residue protein sequence, read N- to C-terminus: MTNTILDTYSSRRKPRRIGILTSGGDAPGMNGAIRAVVRTAIQNGCEAWAIHEGYEGLIQGGAMMHPLYWEDVRGFLSRGGTLIGSVRCDRFREREGRLQAARNMVLFGIDALVVCGGDGSLTGADLFRSEWPELLNELVSTGVLTVAQVAPHQNLNIVGLLGSIDNDFSGTDATIGCYSALTRICEAVDAVFDTASSHRRGFVVEVMGRHCGWLALMAAIATGADWLFIPERPPRDGWEDDMCSIITKNRNRGKRRTIVILAEGAQDSNLDRISSSAVKDVLSKRLGLDTRVTVLGHIQRGGSPCAYDRWLSTLQGIHAVKAVLSMTPESPSPVVIIQENRIRTSSLAETVALTKEANASMHAKEFEKAATLRDPEFMEYHSAYRHLNTSDHPKMVLPEDKRMRVAIIHVGAPAAGMNPATRAVVAYCLTRGHTPIAIHNGFPGLCRHHDDTPGSVREMHWLESGDWINDGGSDIGTNAGLPLDDIETTAQCFERYKFDALFVIGGFEAFTAVSQLRKARKQYLAFRIPLVLLPASMSNNVPGTEYSLGSDTSLNTLVYFCDVVRQSASSSGHSVFVVEAQGAEYQATAAALAAGAMTVYTPERGITLQSLSNDIEYLRQQFSKDHGANRSGKLIIRNDQTSTIYSTTEIANIIKHEAKNRFDAQGVVPGHFQQGGKVSPIDRIRAFRLAVKCMEHLETFAGQSPEEIMNDENSATVISIKQSRILLLPMGGPTGVEATDTDWKRQRPKTQNWLEIQEAVDSLSGRSSLYAIPN.

Residues 1 to 390 (MTNTILDTYS…YHSAYRHLNT (390 aa)) are N-terminal catalytic PFK domain 1. ATP-binding positions include G25, 88 to 89 (RC), and 118 to 121 (GDGS). Residue D119 coordinates Mg(2+). Substrate-binding positions include 164 to 166 (SID), R201, 208 to 210 (MGR), E264, R292, and 298 to 301 (HIQR). D166 (proton acceptor) is an active-site residue. The segment at 391–404 (SDHPKMVLPEDKRM) is interdomain linker. Residues 405 to 775 (RVAIIHVGAP…GRSSLYAIPN (371 aa)) form a C-terminal regulatory PFK domain 2 region. Residues 537 to 541 (SMSNN), 582 to 584 (QGA), D640, and 672 to 675 (HFQQ) contribute to the beta-D-fructose 2,6-bisphosphate site.

It belongs to the phosphofructokinase type A (PFKA) family. ATP-dependent PFK group I subfamily. Eukaryotic two domain clade 'E' sub-subfamily. Homotetramer. It depends on Mg(2+) as a cofactor.

The protein resides in the cytoplasm. It carries out the reaction beta-D-fructose 6-phosphate + ATP = beta-D-fructose 1,6-bisphosphate + ADP + H(+). It functions in the pathway carbohydrate degradation; glycolysis; D-glyceraldehyde 3-phosphate and glycerone phosphate from D-glucose: step 3/4. With respect to regulation, allosterically activated by ADP, AMP, or fructose 2,6-bisphosphate, and allosterically inhibited by ATP or citrate. Functionally, catalyzes the phosphorylation of D-fructose 6-phosphate to fructose 1,6-bisphosphate by ATP, the first committing step of glycolysis. This Aspergillus oryzae (strain ATCC 42149 / RIB 40) (Yellow koji mold) protein is ATP-dependent 6-phosphofructokinase 2 (pfkB).